A 462-amino-acid polypeptide reads, in one-letter code: Elongation factor 1-alpha, somatic form (462 aa).

A N,N,N-trimethylglycine modification is found at Gly2. The tr-type G domain occupies 5–242 (KTHINIVVIG…DCILPPSRPT (238 aa)). The G1 stretch occupies residues 14-21 (GHVDSGKS). Residue 14–21 (GHVDSGKS) participates in GTP binding. A G2 region spans residues 70–74 (GITID). A G3 region spans residues 91-94 (DAPG). GTP-binding positions include 91-95 (DAPGH) and 153-156 (NKMD). A G4 region spans residues 153 to 156 (NKMD). The tract at residues 194–196 (SGW) is G5. 5-glutamyl glycerylphosphorylethanolamine is present on residues Glu301 and Glu374.

This sequence belongs to the TRAFAC class translation factor GTPase superfamily. Classic translation factor GTPase family. EF-Tu/EF-1A subfamily.

Its subcellular location is the cytoplasm. Its function is as follows. This protein promotes the GTP-dependent binding of aminoacyl-tRNA to the A-site of ribosomes during protein biosynthesis. The chain is Elongation factor 1-alpha, somatic form (eef1as) from Xenopus laevis (African clawed frog).